Consider the following 439-residue polypeptide: Acyl-coenzyme A thioesterase 9, mitochondrial (439 aa).

The N-terminal 21 residues, 1–21 (MKRAAIRLWTLNKGLLTHGRG), are a transit peptide targeting the mitochondrion. 2 HotDog ACOT-type domains span residues 85–209 (SYIE…RDSE) and 289–401 (EDTK…EKEV). An N6-acetyllysine modification is found at Lys102.

This sequence belongs to the acyl coenzyme A hydrolase family. As to quaternary structure, interacts with NYAP1, NYAP2 and MYO16. Widely expressed.

It localises to the mitochondrion. Its subcellular location is the mitochondrion matrix. It is found in the mitochondrion inner membrane. The catalysed reaction is butanoyl-CoA + H2O = butanoate + CoA + H(+). It catalyses the reaction propanoyl-CoA + H2O = propanoate + CoA + H(+). It carries out the reaction hexadecanoyl-CoA + H2O = hexadecanoate + CoA + H(+). The enzyme catalyses octanoyl-CoA + H2O = octanoate + CoA + H(+). The catalysed reaction is decanoyl-CoA + H2O = decanoate + CoA + H(+). It catalyses the reaction tetradecanoyl-CoA + H2O = tetradecanoate + CoA + H(+). It carries out the reaction 4,8-dimethylnonanoyl-CoA + H2O = 4,8-dimethylnonanoate + CoA + H(+). The enzyme catalyses 3-methylbutanoyl-CoA + H2O = 3-methylbutanoate + CoA + H(+). The catalysed reaction is 2-methylpropanoyl-CoA + H2O = 2-methylpropanoate + CoA + H(+). The protein operates within lipid metabolism; fatty acid metabolism. With respect to regulation, strongly inhibited by NADH and CoA. In terms of biological role, mitochondrial acyl-CoA thioesterase. Catalyzes the hydrolysis of acyl-CoAs into free fatty acids and coenzyme A (CoA), regulating their respective intracellular levels. Shows a clear preference for hydrophobic short-, medium-, and long-chain saturated acyl-CoAs with some activity also with short-chain dicarboxylic CoA esters. Regulates both mitochondrial lipid and amino acid metabolism. The polypeptide is Acyl-coenzyme A thioesterase 9, mitochondrial (Acot9) (Mus musculus (Mouse)).